The following is a 206-amino-acid chain: Large ribosomal subunit protein uL4 (206 aa).

The interval 48 to 78 is disordered; it reads THSVKTRGHVSGGGAKPWRQKGTGRARAGSN.

The protein belongs to the universal ribosomal protein uL4 family. In terms of assembly, part of the 50S ribosomal subunit.

One of the primary rRNA binding proteins, this protein initially binds near the 5'-end of the 23S rRNA. It is important during the early stages of 50S assembly. It makes multiple contacts with different domains of the 23S rRNA in the assembled 50S subunit and ribosome. In terms of biological role, forms part of the polypeptide exit tunnel. The chain is Large ribosomal subunit protein uL4 from Lawsonia intracellularis (strain PHE/MN1-00).